A 359-amino-acid chain; its full sequence is Probable dual-specificity RNA methyltransferase RlmN (359 aa).

The active-site Proton acceptor is the Glu91. Residues 97-335 form the Radical SAM core domain; it reads QHYGHSVCVT…CVVRQEHGTD (239 aa). Cys104 and Cys340 are oxidised to a cystine. [4Fe-4S] cluster-binding residues include Cys111, Cys115, and Cys118. Residues 163–164, Ser195, 218–220, and Asn296 contribute to the S-adenosyl-L-methionine site; these read GE and SLH. The active-site S-methylcysteine intermediate is Cys340.

This sequence belongs to the radical SAM superfamily. RlmN family. [4Fe-4S] cluster serves as cofactor.

It localises to the cytoplasm. It catalyses the reaction adenosine(2503) in 23S rRNA + 2 reduced [2Fe-2S]-[ferredoxin] + 2 S-adenosyl-L-methionine = 2-methyladenosine(2503) in 23S rRNA + 5'-deoxyadenosine + L-methionine + 2 oxidized [2Fe-2S]-[ferredoxin] + S-adenosyl-L-homocysteine. The enzyme catalyses adenosine(37) in tRNA + 2 reduced [2Fe-2S]-[ferredoxin] + 2 S-adenosyl-L-methionine = 2-methyladenosine(37) in tRNA + 5'-deoxyadenosine + L-methionine + 2 oxidized [2Fe-2S]-[ferredoxin] + S-adenosyl-L-homocysteine. Its function is as follows. Specifically methylates position 2 of adenine 2503 in 23S rRNA and position 2 of adenine 37 in tRNAs. This is Probable dual-specificity RNA methyltransferase RlmN from Streptococcus pyogenes serotype M12 (strain MGAS2096).